Reading from the N-terminus, the 411-residue chain is 2,3-bisphosphoglycerate-independent phosphoglycerate mutase (411 aa).

This sequence belongs to the BPG-independent phosphoglycerate mutase family. A-PGAM subfamily. Homotetramer. The cofactor is Mg(2+).

It catalyses the reaction (2R)-2-phosphoglycerate = (2R)-3-phosphoglycerate. Its pathway is carbohydrate degradation; glycolysis; pyruvate from D-glyceraldehyde 3-phosphate: step 3/5. Its activity is regulated as follows. Inhibited to approximately 20% by EDTA. In terms of biological role, catalyzes the interconversion of 2-phosphoglycerate and 3-phosphoglycerate. The sequence is that of 2,3-bisphosphoglycerate-independent phosphoglycerate mutase (apgM) from Pyrococcus furiosus (strain ATCC 43587 / DSM 3638 / JCM 8422 / Vc1).